A 260-amino-acid polypeptide reads, in one-letter code: HTH-type transcriptional activator FapR (260 aa).

The region spanning 154 to 251 (ERIVTLLFSD…GVTPKKFEIG (98 aa)) is the HTH araC/xylS-type domain. 2 consecutive DNA-binding regions (H-T-H motif) follow at residues 171 to 192 (SDIA…EQEC) and 218 to 241 (IGMI…KEYY).

As to quaternary structure, homodimer.

In terms of biological role, positive regulator of the expression of the 987P operon for the fimbrial protein in enterotoxigenic E.coli. The protein is HTH-type transcriptional activator FapR of Escherichia coli.